Reading from the N-terminus, the 202-residue chain is Imidazoleglycerol-phosphate dehydratase (202 aa).

It belongs to the imidazoleglycerol-phosphate dehydratase family.

The protein localises to the cytoplasm. It carries out the reaction D-erythro-1-(imidazol-4-yl)glycerol 3-phosphate = 3-(imidazol-4-yl)-2-oxopropyl phosphate + H2O. It participates in amino-acid biosynthesis; L-histidine biosynthesis; L-histidine from 5-phospho-alpha-D-ribose 1-diphosphate: step 6/9. In Salinibacter ruber (strain DSM 13855 / M31), this protein is Imidazoleglycerol-phosphate dehydratase.